The sequence spans 193 residues: Peptidyl-tRNA hydrolase (193 aa).

Position 17 (tyrosine 17) interacts with tRNA. Catalysis depends on histidine 22, which acts as the Proton acceptor. TRNA-binding residues include phenylalanine 68, asparagine 70, and asparagine 115.

The protein belongs to the PTH family. As to quaternary structure, monomer.

The protein resides in the cytoplasm. It catalyses the reaction an N-acyl-L-alpha-aminoacyl-tRNA + H2O = an N-acyl-L-amino acid + a tRNA + H(+). Its function is as follows. Hydrolyzes ribosome-free peptidyl-tRNAs (with 1 or more amino acids incorporated), which drop off the ribosome during protein synthesis, or as a result of ribosome stalling. Catalyzes the release of premature peptidyl moieties from peptidyl-tRNA molecules trapped in stalled 50S ribosomal subunits, and thus maintains levels of free tRNAs and 50S ribosomes. In Alteromonas mediterranea (strain DSM 17117 / CIP 110805 / LMG 28347 / Deep ecotype), this protein is Peptidyl-tRNA hydrolase.